The chain runs to 365 residues: Succinyl-diaminopimelate desuccinylase (365 aa).

H65 provides a ligand contact to Zn(2+). The active site involves D67. D96 serves as a coordination point for Zn(2+). E126 acts as the Proton acceptor in catalysis. Residues E127, E155, and H340 each contribute to the Zn(2+) site.

Belongs to the peptidase M20A family. DapE subfamily. As to quaternary structure, homodimer. Requires Zn(2+) as cofactor. Co(2+) is required as a cofactor.

It catalyses the reaction N-succinyl-(2S,6S)-2,6-diaminopimelate + H2O = (2S,6S)-2,6-diaminopimelate + succinate. It functions in the pathway amino-acid biosynthesis; L-lysine biosynthesis via DAP pathway; LL-2,6-diaminopimelate from (S)-tetrahydrodipicolinate (succinylase route): step 3/3. Catalyzes the hydrolysis of N-succinyl-L,L-diaminopimelic acid (SDAP), forming succinate and LL-2,6-diaminopimelate (DAP), an intermediate involved in the bacterial biosynthesis of lysine and meso-diaminopimelic acid, an essential component of bacterial cell walls. This Campylobacter jejuni subsp. jejuni serotype O:6 (strain 81116 / NCTC 11828) protein is Succinyl-diaminopimelate desuccinylase.